Here is a 376-residue protein sequence, read N- to C-terminus: Protein STRICTOSIDINE SYNTHASE-LIKE 2 (376 aa).

The N-terminal stretch at 1 to 23 (MMKLLLVVATSVALIFSVTDLSG) is a signal peptide. Asn-79 and Asn-244 each carry an N-linked (GlcNAc...) asparagine glycan.

It belongs to the strictosidine synthase family.

It localises to the vacuole. The polypeptide is Protein STRICTOSIDINE SYNTHASE-LIKE 2 (Arabidopsis thaliana (Mouse-ear cress)).